A 371-amino-acid chain; its full sequence is Cytochrome b (371 aa).

A run of 4 helical transmembrane segments spans residues 25-45 (FGSMLLTCSALQVMTGFSLSM), 69-90 (WVMQNLHAIGASMFFICIYMYI), 105-125 (WLSGTTLLIMLMATAFFGYVL), and 170-190 (FFALHFILPFGIISVSSIHIM). H75 contributes to the heme b binding site. Residues H174 and H188 each coordinate heme b. Residue H193 participates in a ubiquinone binding. The next 4 membrane-spanning stretches (helical) occupy residues 218 to 238 (YKDILMISIMIITLLLTVSFF), 280 to 300 (LGGALALVMSIMILFTMPFTH), 312 to 332 (LMQFMFWTLVATFVIITWTAT), and 339 to 358 (FTTISQVASIIYFTFFMSNP).

Belongs to the cytochrome b family. The cytochrome bc1 complex contains 3 respiratory subunits (MT-CYB, CYC1 and UQCRFS1), 2 core proteins (UQCRC1 and UQCRC2) and probably 6 low-molecular weight proteins. It depends on heme b as a cofactor.

Its subcellular location is the mitochondrion inner membrane. Component of the ubiquinol-cytochrome c reductase complex (complex III or cytochrome b-c1 complex) that is part of the mitochondrial respiratory chain. The b-c1 complex mediates electron transfer from ubiquinol to cytochrome c. Contributes to the generation of a proton gradient across the mitochondrial membrane that is then used for ATP synthesis. This chain is Cytochrome b (MT-CYB), found in Candoia aspera (New Guinea boa).